The following is a 931-amino-acid chain: Isoleucine--tRNA ligase (931 aa).

Positions 58–68 (PYANGHLHCGH) match the 'HIGH' region motif. Glutamate 559 provides a ligand contact to L-isoleucyl-5'-AMP. A 'KMSKS' region motif is present at residues 600–604 (KLSKS). Lysine 603 provides a ligand contact to ATP. 4 residues coordinate Zn(2+): cysteine 894, cysteine 897, cysteine 914, and cysteine 917.

It belongs to the class-I aminoacyl-tRNA synthetase family. IleS type 1 subfamily. In terms of assembly, monomer. Zn(2+) is required as a cofactor.

It localises to the cytoplasm. It carries out the reaction tRNA(Ile) + L-isoleucine + ATP = L-isoleucyl-tRNA(Ile) + AMP + diphosphate. Its function is as follows. Catalyzes the attachment of isoleucine to tRNA(Ile). As IleRS can inadvertently accommodate and process structurally similar amino acids such as valine, to avoid such errors it has two additional distinct tRNA(Ile)-dependent editing activities. One activity is designated as 'pretransfer' editing and involves the hydrolysis of activated Val-AMP. The other activity is designated 'posttransfer' editing and involves deacylation of mischarged Val-tRNA(Ile). The sequence is that of Isoleucine--tRNA ligase from Legionella pneumophila (strain Paris).